A 597-amino-acid polypeptide reads, in one-letter code: MSGPSSGCGFLMSVVVHGDLALNEQEKELNQRLRRLYPAVNEQETPLPRSWSPKDKFSYIGLSQNNLRVHYKGHGKTPKDAASVRATHPIPAACGVYYFEVKIISKGRDGYMGIGLSAQGVNMNRLPGWDKHSYGYHGDDGHSFCSSGTGQPYGPTFTTGDVIGCCVNLINNTCFYTKNGHSLGIAFTDLPPNLYPTVGLQTPGEVVDANFGQHPFVFDIEDYMREWRTKIQSQIDRFPIGEREGEWQAMIQKMVASYLVHHSYCATAEAFAKSTDQAVHEELASIKNRQKIQKLVLSGRMGEAIETTQQLYPSLLERNPDLLFMLKVRQFIEMVNGTDSEVRCLGGRSPKSQDSYPGSPRLFNSPVHKPSSSQAYQTGFDSNYCNGVSSSKGHTSAHSHKSCPPTLSSPELGVLNGSRGQQTIVSSEVEMEVDHFSNGVSESSSNGFLNGSSTHGTEQEDCDADMEVDSTQSKRQLCGGSQAAIERMIQFGRELQSMSEHLRRERGKNSANKKMLKDAFSLLAYSDPWNSPVGYQLDSIQREPVCSTLNSAILETHNLPKQPPLALAMGQAAQCLSLMARTGSGSCAFASVDDYLH.

The B30.2/SPRY domain occupies 29–216 (LNQRLRRLYP…VDANFGQHPF (188 aa)). One can recognise a LisH domain in the interval 247-279 (WQAMIQKMVASYLVHHSYCATAEAFAKSTDQAV). Residues 285-342 (SIKNRQKIQKLVLSGRMGEAIETTQQLYPSLLERNPDLLFMLKVRQFIEMVNGTDSEV) enclose the CTLH domain. Disordered stretches follow at residues 343 to 375 (RCLGGRSPKSQDSYPGSPRLFNSPVHKPSSSQA), 389 to 417 (SSSKGHTSAHSHKSCPPTLSSPELGVLNG), and 437 to 475 (SNGVSESSSNGFLNGSSTHGTEQEDCDADMEVDSTQSKR). Residues 438–456 (NGVSESSSNGFLNGSSTHG) show a composition bias toward polar residues. Acidic residues predominate over residues 459 to 468 (QEDCDADMEV).

It belongs to the RANBP9/10 family. In terms of assembly, identified in the CTLH complex that contains at least MAEA, RMND5A (or alternatively its paralog RMND5B), GID8, WDR26, and RANBP9 and/or RANBP10.

The protein localises to the cytoplasm. The protein resides in the cell membrane. Its subcellular location is the nucleus. Functionally, may act as scaffolding protein, and as adapter protein to couple membrane receptors to intracellular signaling pathways. Acts as a mediator of cell spreading and actin cytoskeleton rearrangement. Core component of the CTLH E3 ubiquitin-protein ligase complex that mediates ubiquitination and subsequent proteasomal degradation of target proteins. The protein is Ran-binding protein 9 (ranbp9) of Danio rerio (Zebrafish).